The following is a 172-amino-acid chain: 3-hydroxydecanoyl-[acyl-carrier-protein] dehydratase (172 aa).

Residue His-71 is part of the active site.

This sequence belongs to the thioester dehydratase family. FabA subfamily. As to quaternary structure, homodimer.

It is found in the cytoplasm. The catalysed reaction is a (3R)-hydroxyacyl-[ACP] = a (2E)-enoyl-[ACP] + H2O. It catalyses the reaction (3R)-hydroxydecanoyl-[ACP] = (2E)-decenoyl-[ACP] + H2O. The enzyme catalyses (2E)-decenoyl-[ACP] = (3Z)-decenoyl-[ACP]. It participates in lipid metabolism; fatty acid biosynthesis. Necessary for the introduction of cis unsaturation into fatty acids. Catalyzes the dehydration of (3R)-3-hydroxydecanoyl-ACP to E-(2)-decenoyl-ACP and then its isomerization to Z-(3)-decenoyl-ACP. Can catalyze the dehydratase reaction for beta-hydroxyacyl-ACPs with saturated chain lengths up to 16:0, being most active on intermediate chain length. The protein is 3-hydroxydecanoyl-[acyl-carrier-protein] dehydratase of Vibrio parahaemolyticus serotype O3:K6 (strain RIMD 2210633).